The chain runs to 299 residues: Kynurenine formamidase-like hydrolase fscH (299 aa).

An HGGXW motif is present at residues 48 to 52; it reads HGGAW. The tract at residues 90–110 is disordered; it reads SPRTPSQPVPSGGHVGGEQQA. Ser142 acts as the Nucleophile in catalysis.

Belongs to the kynurenine formamidase family.

The protein operates within secondary metabolite biosynthesis. Functionally, kynurenine formamidase-like hydrolase; part of the fragmented gene cluster that mediates the biosynthesis of fusarochromene, a tryptophan-derived metabolite closely related to a group of mycotoxins including fusarochromanone. Within the pathway, fscH converts the product of fscD into 4-hydroxykyrunenine. The first step of the pathway is the epimerization of L-tryptophan to D-tryptophan in the presence of the NRPS-like tryptophan epimerase fscC. D-tryptophan is subsequently hydroxylated by the tryptophan 6-hydroxylase fscE to yield 6-hydroxytryptophan. The pyrrole ring undergoes cleavaged by the tryptophan 2,3-dioxygenase fscD and is finally converted to 4-hydroxykyrunenine by the hydrolase fscH. The NRPS-like oxidoreductase fscA reduces the carboxyl group to primary alcohol and the DMATS-type prenyltransferase fscG performs prenylation, followed by the formation of a chromene ring catalyzed by the oxidoreductase fscI, which leads to desacetylfusarochromene. Epoxidation by fscF and rearrangement reactions of chromene double bonds convert compound desacetylfusarochromene to fusarochromanones. Although specific acetyltransferases were not found near the fsc gene cluster, several predicted enzymes containing the N-acetyltransferase superfamily domain are present in the genome of F.equiseti. These predicted enzymes may have the potential to convert desacetylfusarochromene to fusarochromene. This Fusarium equiseti (Fusarium scirpi) protein is Kynurenine formamidase-like hydrolase fscH.